The chain runs to 79 residues: Succinate dehydrogenase assembly factor 1, mitochondrial (79 aa).

This sequence belongs to the complex I LYR family. SDHAF1 subfamily. Interacts with SDH2 within an SDH1-SDH2 subcomplex.

The protein localises to the mitochondrion matrix. Functionally, plays an essential role in the assembly of succinate dehydrogenase (SDH), an enzyme complex (also referred to as respiratory complex II) that is a component of both the tricarboxylic acid (TCA) cycle and the mitochondrial electron transport chain, and which couples the oxidation of succinate to fumarate with the reduction of ubiquinone (coenzyme Q) to ubiquinol. Promotes maturation of the iron-sulfur protein subunit SDH2 of the SDH catalytic dimer, protecting it from the deleterious effects of oxidants. Acts together with SDHAF3 (SDH7). The chain is Succinate dehydrogenase assembly factor 1, mitochondrial from Saccharomyces cerevisiae (strain YJM789) (Baker's yeast).